The primary structure comprises 116 residues: NADH-ubiquinone oxidoreductase chain 3 (116 aa).

Helical transmembrane passes span 3–23 (LVTT…TISF), 56–76 (FFLI…LLPL), and 84–104 (APTL…LGLI).

It belongs to the complex I subunit 3 family.

It localises to the mitochondrion membrane. It carries out the reaction a ubiquinone + NADH + 5 H(+)(in) = a ubiquinol + NAD(+) + 4 H(+)(out). In terms of biological role, core subunit of the mitochondrial membrane respiratory chain NADH dehydrogenase (Complex I) that is believed to belong to the minimal assembly required for catalysis. Complex I functions in the transfer of electrons from NADH to the respiratory chain. The immediate electron acceptor for the enzyme is believed to be ubiquinone. The polypeptide is NADH-ubiquinone oxidoreductase chain 3 (MT-ND3) (Oncorhynchus nerka (Sockeye salmon)).